The sequence spans 412 residues: Translation initiation factor 2 subunit gamma (412 aa).

The region spanning 8-205 is the tr-type G domain; it reads QAEMNIGMVG…AMYEHFEPPE (198 aa). The tract at residues 17–24 is G1; that stretch reads GHVDHGKT. Mg(2+)-binding residues include Asp-20, Thr-24, Gly-45, and Ser-47. Residue 20–25 coordinates GTP; it reads DHGKTT. The segment at 45-49 is G2; sequence GISIR. The Zn(2+) site is built by Cys-60, Cys-63, Cys-72, and Cys-75. A G3 region spans residues 89 to 92; the sequence is DSPG. Residues 145–148 and 183–185 contribute to the GTP site; these read NKID and SAQ. Residues 145–148 form a G4 region; that stretch reads NKID. The interval 183-185 is G5; the sequence is SAQ.

The protein belongs to the TRAFAC class translation factor GTPase superfamily. Classic translation factor GTPase family. EIF2G subfamily. As to quaternary structure, heterotrimer composed of an alpha, a beta and a gamma chain. Requires Mg(2+) as cofactor.

It catalyses the reaction GTP + H2O = GDP + phosphate + H(+). EIF-2 functions in the early steps of protein synthesis by forming a ternary complex with GTP and initiator tRNA. The sequence is that of Translation initiation factor 2 subunit gamma from Methanopyrus kandleri (strain AV19 / DSM 6324 / JCM 9639 / NBRC 100938).